Reading from the N-terminus, the 573-residue chain is MAVPKESIPSLLECQCQICVEILFEPVTLPCNHTLCKPCFESTVEKASLCCPFCRRRVSSWARYRSRTNSLVNMELWEIIQKHYPKECKLRASGQESKEIVDDYQPVRLLSKPGELRREYEEEISKVEAERRACEEEENKASEEYIQKLLAEEEEEEKRQAEKRHREMEEQLKSDEELARRLSLDINNFCEGSVLASPLNSRKSDPVTTKSQKKSKNKQTNTGDIQKYLSPKSQLGSASQSEVVQEDRKSSMSKKIDDNSDVKSPTWQDTEVEEDMPTLSPQIYLEVQEQGAKSSVESPMPQLYTSDGEWYLEGKVETGPSNHEKGLCVINLEEPKARVPYSGDAATEPCGETESECTVSYMTQFLRNNTVGTENEESHLQISKGTSKRRNLEPLSEAIREPCFSAKRRKMFPKASSDQEETEISLTQKLIDLEHLLFERHKQEKQDRLLALQLQEEVDQEQMRPDRQKGSPDGYQLRTVSSPPDKVLNGQRKNSRDRNSKRQTELEQPKPRTDSKNENHQQPSFKIQLKCSVNRRKIANSTNDNCNVSKTAHSLQPSKSQKSIFQMFQRVTK.

An RING-type zinc finger spans residues 16-55 (CQICVEILFEPVTLPCNHTLCKPCFESTVEKASLCCPFCR). Phosphoserine is present on Ser70. The LR motif 1 motif lies at 110-128 (LSKPGELRREYEEEISKVE). Residues 143 to 151 (EEYIQKLLA) carry the UMI motif motif. Disordered stretches follow at residues 153 to 174 (EEEEEKRQAEKRHREMEEQLKS) and 196 to 277 (ASPL…EDMP). The segment covering 157–174 (EKRQAEKRHREMEEQLKS) has biased composition (basic and acidic residues). Residues 168–191 (MEEQLKSDEELARRLSLDINNFCE) carry the MIU motif 1 motif. Ser197 is modified (phosphoserine). Residue Lys210 forms a Glycyl lysine isopeptide (Lys-Gly) (interchain with G-Cter in SUMO2) linkage. The span at 231 to 243 (PKSQLGSASQSEV) shows a compositional bias: polar residues. Basic and acidic residues predominate over residues 245 to 261 (QEDRKSSMSKKIDDNSD). Position 363 is a phosphothreonine (Thr363). A Phosphoserine modification is found at Ser416. The MIU motif 2 signature appears at 440–463 (RHKQEKQDRLLALQLQEEVDQEQM). The disordered stretch occupies residues 456-528 (EEVDQEQMRP…NHQQPSFKIQ (73 aa)). Over residues 461–470 (EQMRPDRQKG) the composition is skewed to basic and acidic residues. The LR motif 2 signature appears at 467–478 (RQKGSPDGYQLR). Ser471 is subject to Phosphoserine. A compositionally biased stretch (basic and acidic residues) spans 494 to 519 (NSRDRNSKRQTELEQPKPRTDSKNEN). Lys530 participates in a covalent cross-link: Glycyl lysine isopeptide (Lys-Gly) (interchain with G-Cter in SUMO2). Residues 540–573 (NSTNDNCNVSKTAHSLQPSKSQKSIFQMFQRVTK) are disordered.

The protein belongs to the RNF168 family. Monomer. Interacts with UBE2N/UBC13. In terms of processing, sumoylated with SUMO1 by PIAS4 in response to double-strand breaks (DSBs). Ubiquitinated.

Its subcellular location is the nucleus. It carries out the reaction S-ubiquitinyl-[E2 ubiquitin-conjugating enzyme]-L-cysteine + [acceptor protein]-L-lysine = [E2 ubiquitin-conjugating enzyme]-L-cysteine + N(6)-ubiquitinyl-[acceptor protein]-L-lysine.. Its pathway is protein modification; protein ubiquitination. E3 ubiquitin-protein ligase required for accumulation of repair proteins to sites of DNA damage. Acts with UBE2N/UBC13 to amplify the RNF8-dependent histone ubiquitination. Recruited to sites of DNA damage at double-strand breaks (DSBs) by binding to ubiquitinated histone H2A and H2AX and amplifies the RNF8-dependent H2A ubiquitination, promoting the formation of 'Lys-63'-linked ubiquitin conjugates. This leads to concentrate ubiquitinated histones H2A and H2AX at DNA lesions to the threshold required for recruitment of TP53BP1 and BRCA1. Also recruited at DNA interstrand cross-links (ICLs) sites and promotes accumulation of 'Lys-63'-linked ubiquitination of histones H2A and H2AX, leading to recruitment of FAAP20 and Fanconi anemia (FA) complex, followed by interstrand cross-link repair. H2A ubiquitination also mediates the ATM-dependent transcriptional silencing at regions flanking DSBs in cis, a mechanism to avoid collision between transcription and repair intermediates. Also involved in class switch recombination in immune system, via its role in regulation of DSBs repair. Following DNA damage, promotes the ubiquitination and degradation of JMJD2A/KDM4A in collaboration with RNF8, leading to unmask H4K20me2 mark and promote the recruitment of TP53BP1 at DNA damage sites. Not able to initiate 'Lys-63'-linked ubiquitination in vitro; possibly due to partial occlusion of the UBE2N/UBC13-binding region. Catalyzes monoubiquitination of 'Lys-13' and 'Lys-15' of nucleosomal histone H2A (H2AK13Ub and H2AK15Ub, respectively). The protein is E3 ubiquitin-protein ligase RNF168 of Bos taurus (Bovine).